The sequence spans 63 residues: Small ribosomal subunit protein eS27 (63 aa).

Positions 18, 21, 37, and 40 each coordinate Zn(2+). A C4-type zinc finger spans residues 18-40 (CIDCGNEQIVFSHPATKVRCLIC).

It belongs to the eukaryotic ribosomal protein eS27 family. As to quaternary structure, part of the 30S ribosomal subunit. Zn(2+) is required as a cofactor.

The protein is Small ribosomal subunit protein eS27 of Pyrococcus furiosus (strain ATCC 43587 / DSM 3638 / JCM 8422 / Vc1).